Reading from the N-terminus, the 506-residue chain is Cytochrome P450 94B3 (506 aa).

The helical transmembrane segment at 2 to 22 threads the bilayer; the sequence is AFLLSFLILAFLITIIFFLSS. Heme is bound at residue cysteine 447.

Belongs to the cytochrome P450 family. Requires heme as cofactor.

Its subcellular location is the membrane. The protein localises to the endoplasmic reticulum membrane. The catalysed reaction is a jasmonyl-L-amino acid + reduced [NADPH--hemoprotein reductase] + O2 = a 12-hydroxyjasmonyl-L-alpha-amino acid + oxidized [NADPH--hemoprotein reductase] + H2O + H(+). It carries out the reaction L-isoleucine-(+)-7-isojasmonate + NADPH + O2 + H(+) = L-isoleucine-(+)-12-hydroxy-7-isojasmonate + NADP(+) + H2O. The enzyme catalyses a jasmonyl-L-isoleucinate + NADPH + O2 + H(+) = L-isoleucine-12-hydroxyjasmonate + NADP(+) + H2O. Its function is as follows. Hydroxylase involved in the oxidation of the plant hormone jasmonoyl-L-isoleucine (JA-Ile), a bioactive phytohormone of the jasmonate-mediated signaling pathway. Converts JA-Ile to 12-hydroxy-JA-Ile. Exerts negative feedback control on JA-Ile levels and plays a key role in attenuation of jasmonate responses. Negatively regulates the expression of wound-induced genes TIFY11A/JAZ5, TIFY5A/JAZ8 and TIFY5A/JAZ10. Catalyzes the hydroxylation of jasmonoyl-L-valine (JA-Val), jasmonoyl-L-leucine (JA-Leu) and jasmonoyl-L-phenylalanine (JA-Phe) in vitro. Converts JA-Val, JA-Leu and JA-Phe to 12-hydroxy-JA-Val, 12-hydroxy-JA-Leu and 12-hydroxy-JA-Phe, respectively. The polypeptide is Cytochrome P450 94B3 (Arabidopsis thaliana (Mouse-ear cress)).